The primary structure comprises 156 residues: Nuclear cap-binding protein subunit 2 (156 aa).

Ser2 bears the N-acetylserine mark. 2 positions are modified to phosphoserine: Ser13 and Ser18. MRNA-binding positions include Tyr20, Tyr43, Arg112–Asp116, Arg123–Arg127, and Gln133–Val134. The RRM domain maps to Cys40–Gly118. The disordered stretch occupies residues Gln124 to Gln156. Residues Val134 to Ala144 are compositionally biased toward basic and acidic residues. Omega-N-methylarginine is present on Arg146.

It belongs to the RRM NCBP2 family. As to quaternary structure, component of the nuclear cap-binding complex (CBC), a heterodimer composed of NCBP1/CBP80 and NCBP2/CBP20 that interacts with m7GpppG-capped RNA. Found in a U snRNA export complex with PHAX/RNUXA, NCBP1/CBP80, NCBP2/CBP20, RAN, XPO1 and m7G-capped RNA. Interacts with PHAX/RNUXA, EIF4G1, HNRNPF, HNRNPH1 and ALYREF/THOC4/ALY. Interacts with SRRT/ARS2 and KPNA3.

Its subcellular location is the nucleus. The protein localises to the cytoplasm. Its function is as follows. Component of the cap-binding complex (CBC), which binds co-transcriptionally to the 5' cap of pre-mRNAs and is involved in various processes such as pre-mRNA splicing, translation regulation, nonsense-mediated mRNA decay, RNA-mediated gene silencing (RNAi) by microRNAs (miRNAs) and mRNA export. The CBC complex is involved in mRNA export from the nucleus via its interaction with ALYREF/THOC4/ALY, leading to the recruitment of the mRNA export machinery to the 5' end of mRNA and to mRNA export in a 5' to 3' direction through the nuclear pore. The CBC complex is also involved in mediating U snRNA and intronless mRNAs export from the nucleus. The CBC complex is essential for a pioneer round of mRNA translation, before steady state translation when the CBC complex is replaced by cytoplasmic cap-binding protein eIF4E. The pioneer round of mRNA translation mediated by the CBC complex plays a central role in nonsense-mediated mRNA decay (NMD), NMD only taking place in mRNAs bound to the CBC complex, but not on eIF4E-bound mRNAs. The CBC complex enhances NMD in mRNAs containing at least one exon-junction complex (EJC) via its interaction with UPF1, promoting the interaction between UPF1 and UPF2. The CBC complex is also involved in 'failsafe' NMD, which is independent of the EJC complex, while it does not participate in Staufen-mediated mRNA decay (SMD). During cell proliferation, the CBC complex is also involved in microRNAs (miRNAs) biogenesis via its interaction with SRRT/ARS2, thereby being required for miRNA-mediated RNA interference. The CBC complex also acts as a negative regulator of PARN, thereby acting as an inhibitor of mRNA deadenylation. In the CBC complex, NCBP2/CBP20 recognizes and binds capped RNAs (m7GpppG-capped RNA) but requires NCBP1/CBP80 to stabilize the movement of its N-terminal loop and lock the CBC into a high affinity cap-binding state with the cap structure. The conventional cap-binding complex with NCBP2 binds both small nuclear RNA (snRNA) and messenger (mRNA) and is involved in their export from the nucleus. This chain is Nuclear cap-binding protein subunit 2 (NCBP2), found in Bos taurus (Bovine).